The primary structure comprises 1757 residues: E3 ubiquitin-protein ligase UBR1 (1757 aa).

Positions 1 to 24 are disordered; it reads MADEEMDGAERMDVSPEPPLAPQR. Position 2 is an N-acetylalanine (Ala2). The segment at 97-168 adopts a UBR-type zinc-finger fold; it reads QLCGKVFKSG…TGPFCVDHEP (72 aa). Zn(2+) contacts are provided by Cys99, Cys112, Cys115, Cys124, Cys127, His133, and His136. Phe148 contributes to the a peptide binding site. Cys149 contacts Zn(2+). Asp150 provides a ligand contact to a peptide. Cys151 lines the Zn(2+) pocket. Asp153 is a binding site for a peptide. Zn(2+) contacts are provided by Cys163 and His166. Residues 842–868 are disordered; it reads QHSKAEHMQKKRRKQENKDEALPPPPP. Residues 1022–1057 form a UBC2-binding region (U2BR) region; sequence RKRKAEAARLHRQKIMAQMSALQKNFIETHKLMYDN. Residues Cys1101, Cys1104, Cys1162, His1164, His1167, and Cys1170 each coordinate Zn(2+). An RING-type; atypical zinc finger spans residues 1101–1204; sequence CILCQEEQEV…SGEYLCPLCK (104 aa). Ser1182 bears the Phosphoserine mark. Zn(2+) contacts are provided by Cys1200, Cys1203, Cys1635, Cys1638, and Cys1661.

This sequence belongs to the E3 ubiquitin-protein ligase UBR1-like family. As to quaternary structure, interacts with RECQL4. In terms of tissue distribution, present in skeletal muscle and liver (at protein level). Broadly expressed, with highest levels in skeletal muscle and heart. Expressed in acinar cells of the pancreas. In testes, expressed primarily in spermatogonia.

Its subcellular location is the cytoplasm. It is found in the cytosol. It catalyses the reaction S-ubiquitinyl-[E2 ubiquitin-conjugating enzyme]-L-cysteine + [acceptor protein]-L-lysine = [E2 ubiquitin-conjugating enzyme]-L-cysteine + N(6)-ubiquitinyl-[acceptor protein]-L-lysine.. Its pathway is protein modification; protein ubiquitination. In terms of biological role, E3 ubiquitin-protein ligase which is a component of the N-end rule pathway. Recognizes and binds proteins bearing specific N-terminal residues (N-degrons) that are destabilizing according to the N-end rule, leading to their ubiquitination and subsequent degradation. Recognizes both type-1 and type-2 N-degrons, containing positively charged amino acids (Arg, Lys and His) and bulky and hydrophobic amino acids, respectively. Does not ubiquitinate proteins that are acetylated at the N-terminus. In contrast, it strongly binds methylated N-degrons. Binds leucine and is a negative regulator of the leucine-mTOR signaling pathway, thereby controlling cell growth. The protein is E3 ubiquitin-protein ligase UBR1 of Mus musculus (Mouse).